The primary structure comprises 740 residues: Probable type IV piliation system protein DR_0774 (740 aa).

The signal sequence occupies residues 1 to 20 (MNKRHALLLTAVLGMATAYA).

The protein belongs to the bacterial secretin family.

Its subcellular location is the cell envelope. Could be part of the type IV piliation system (T4P). May contribute at the cohesion between the S-layer and the outer membrane by forming oligomers. Could also be the main channel through which trafficking is managed. This Deinococcus radiodurans (strain ATCC 13939 / DSM 20539 / JCM 16871 / CCUG 27074 / LMG 4051 / NBRC 15346 / NCIMB 9279 / VKM B-1422 / R1) protein is Probable type IV piliation system protein DR_0774.